We begin with the raw amino-acid sequence, 155 residues long: Endoribonuclease YbeY (155 aa).

Zn(2+) contacts are provided by histidine 114, histidine 118, and histidine 124.

This sequence belongs to the endoribonuclease YbeY family. The cofactor is Zn(2+).

The protein localises to the cytoplasm. In terms of biological role, single strand-specific metallo-endoribonuclease involved in late-stage 70S ribosome quality control and in maturation of the 3' terminus of the 16S rRNA. In Shigella dysenteriae serotype 1 (strain Sd197), this protein is Endoribonuclease YbeY.